Here is a 337-residue protein sequence, read N- to C-terminus: S-adenosylmethionine:tRNA ribosyltransferase-isomerase (337 aa).

It belongs to the QueA family. In terms of assembly, monomer.

The protein localises to the cytoplasm. It carries out the reaction 7-aminomethyl-7-carbaguanosine(34) in tRNA + S-adenosyl-L-methionine = epoxyqueuosine(34) in tRNA + adenine + L-methionine + 2 H(+). It participates in tRNA modification; tRNA-queuosine biosynthesis. Transfers and isomerizes the ribose moiety from AdoMet to the 7-aminomethyl group of 7-deazaguanine (preQ1-tRNA) to give epoxyqueuosine (oQ-tRNA). This Legionella pneumophila subsp. pneumophila (strain Philadelphia 1 / ATCC 33152 / DSM 7513) protein is S-adenosylmethionine:tRNA ribosyltransferase-isomerase.